The following is a 463-amino-acid chain: Chromosomal replication initiator protein DnaA (463 aa).

The segment at 1–90 (MSLSLWQQCL…KPLSQIISQT (90 aa)) is domain I, interacts with DnaA modulators. The segment at 91-126 (VTASVSAPSAPIVRVAAPSRPSWDNAAPQPELSYRS) is domain II. The segment at 127–343 (NVNPKHTFDN…GALNRVIANA (217 aa)) is domain III, AAA+ region. ATP-binding residues include glycine 171, glycine 173, lysine 174, and threonine 175. Residues 344 to 463 (NFTGRAITID…FSNLIRTLSS (120 aa)) are domain IV, binds dsDNA.

This sequence belongs to the DnaA family. As to quaternary structure, oligomerizes as a right-handed, spiral filament on DNA at oriC.

It localises to the cytoplasm. Plays an essential role in the initiation and regulation of chromosomal replication. ATP-DnaA binds to the origin of replication (oriC) to initiate formation of the DNA replication initiation complex once per cell cycle. Binds the DnaA box (a 9 base pair repeat at the origin) and separates the double-stranded (ds)DNA. Forms a right-handed helical filament on oriC DNA; dsDNA binds to the exterior of the filament while single-stranded (ss)DNA is stabiized in the filament's interior. The ATP-DnaA-oriC complex binds and stabilizes one strand of the AT-rich DNA unwinding element (DUE), permitting loading of DNA polymerase. After initiation quickly degrades to an ADP-DnaA complex that is not apt for DNA replication. Binds acidic phospholipids. This Serratia proteamaculans (strain 568) protein is Chromosomal replication initiator protein DnaA.